The chain runs to 390 residues: COP9/Signalosome and eIF3 complex-shared subunit 1 (390 aa).

Residues 188–351 (QAAKVMTALL…RTLIVSSYQH (164 aa)) form the PCI domain.

The protein belongs to the eIF-3 subunit M family. In terms of assembly, component of the eukaryotic translation initiation factor 3 (eIF-3) complex. Within the eIF-3 complex, interacts directly with eif-3.F. Component of the CSN complex, composed of csn-1, csn-2, csn-3, csn-4, csn-5, csn-6 and csn-7. Within the CSN complex, interacts directly with csn-1 and csn-4.

Its subcellular location is the cytoplasm. In terms of biological role, component of the eukaryotic translation initiation factor 3 (eIF-3) complex, which is involved in protein synthesis of a specialized repertoire of mRNAs and, together with other initiation factors, stimulates binding of mRNA and methionyl-tRNAi to the 40S ribosome. The eIF-3 complex specifically targets and initiates translation of a subset of mRNAs involved in cell proliferation (Potential). Component of the COP9 signalosome complex (CSN), a complex involved in various cellular and developmental processes. The CSN complex is an essential regulator of the ubiquitin (Ubl) conjugation pathway by mediating the deneddylation of the cullin subunits of the SCF-type E3 ligase complexes, leading to decrease the Ubl ligase activity of SCF. The CSN complex plays an essential role in embryogenesis and oogenesis and is required to regulate microtubule stability in the early embryo. Mediates mei-1 targeting for degradation at the meiosis to mitosis transition via deneddylation of cul-3. The protein is COP9/Signalosome and eIF3 complex-shared subunit 1 of Caenorhabditis elegans.